The sequence spans 164 residues: Putative 4-hydroxy-4-methyl-2-oxoglutarate aldolase (164 aa).

Substrate is bound by residues 80-83 (GGNL) and Arg-102. Residue Asp-103 coordinates a divalent metal cation.

Belongs to the class II aldolase/RraA-like family. As to quaternary structure, homotrimer. A divalent metal cation serves as cofactor.

It catalyses the reaction 4-hydroxy-4-methyl-2-oxoglutarate = 2 pyruvate. It carries out the reaction oxaloacetate + H(+) = pyruvate + CO2. In terms of biological role, catalyzes the aldol cleavage of 4-hydroxy-4-methyl-2-oxoglutarate (HMG) into 2 molecules of pyruvate. Also contains a secondary oxaloacetate (OAA) decarboxylase activity due to the common pyruvate enolate transition state formed following C-C bond cleavage in the retro-aldol and decarboxylation reactions. This chain is Putative 4-hydroxy-4-methyl-2-oxoglutarate aldolase, found in Paraburkholderia phymatum (strain DSM 17167 / CIP 108236 / LMG 21445 / STM815) (Burkholderia phymatum).